The primary structure comprises 180 residues: Large ribosomal subunit protein uL5 (180 aa).

It belongs to the universal ribosomal protein uL5 family. In terms of assembly, part of the 50S ribosomal subunit; part of the 5S rRNA/L5/L18/L25 subcomplex. Contacts the 5S rRNA and the P site tRNA. Forms a bridge to the 30S subunit in the 70S ribosome.

In terms of biological role, this is one of the proteins that bind and probably mediate the attachment of the 5S RNA into the large ribosomal subunit, where it forms part of the central protuberance. In the 70S ribosome it contacts protein S13 of the 30S subunit (bridge B1b), connecting the 2 subunits; this bridge is implicated in subunit movement. Contacts the P site tRNA; the 5S rRNA and some of its associated proteins might help stabilize positioning of ribosome-bound tRNAs. In Clostridium acetobutylicum (strain ATCC 824 / DSM 792 / JCM 1419 / IAM 19013 / LMG 5710 / NBRC 13948 / NRRL B-527 / VKM B-1787 / 2291 / W), this protein is Large ribosomal subunit protein uL5.